A 270-amino-acid polypeptide reads, in one-letter code: MDDLKTRVITASVVAPFVVLCFVSYESLIGLVSAILILAGYELITLEMKERDARFFYVILLALYPVLYGLVFEEPTQPLSILFITGVVFSLITDKDPSQVFKTVAAFSIALIYVTFFLSFFLPIYRDFGAANALLVLTSTWVFDSFAYFTGLKFGRTRISPRYSPRKSLEGVIGGFLGVVIYTFLYRLVVNDLLSVNVISFRTFLPFAATVAIMDTFGDIFESALKRHYGVKDSGKTLPGHGGMLDRIDGLLFVAPVSYIVFKILEGVVR.

8 consecutive transmembrane segments (helical) span residues 17–37 (FVVLCFVSYESLIGLVSAILI), 55–75 (FFYVILLALYPVLYGLVFEEP), 81–101 (ILFITGVVFSLITDKDPSQVF), 104–124 (VAAFSIALIYVTFFLSFFLPI), 129–149 (GAANALLVLTSTWVFDSFAYF), 170–190 (EGVIGGFLGVVIYTFLYRLVV), 193–213 (LLSVNVISFRTFLPFAATVAI), and 248–268 (IDGLLFVAPVSYIVFKILEGV).

Belongs to the CDS family.

The protein resides in the cell membrane. The enzyme catalyses a 1,2-diacyl-sn-glycero-3-phosphate + CTP + H(+) = a CDP-1,2-diacyl-sn-glycerol + diphosphate. It functions in the pathway phospholipid metabolism; CDP-diacylglycerol biosynthesis; CDP-diacylglycerol from sn-glycerol 3-phosphate: step 3/3. The chain is Phosphatidate cytidylyltransferase (cdsA) from Thermotoga maritima (strain ATCC 43589 / DSM 3109 / JCM 10099 / NBRC 100826 / MSB8).